The primary structure comprises 271 residues: (+)-cis,trans-nepetalactol synthase NEPS1 (271 aa).

NAD(+) contacts are provided by residues 24–30 (GGASGIG), 49–51 (DIQ), 72–73 (DV), and Asn-99. The substrate site is built by Thr-154 and Tyr-167. Residues Tyr-167, Lys-171, and 200-205 (VLTPLA) contribute to the NAD(+) site. Tyr-167 acts as the Proton acceptor in catalysis.

This sequence belongs to the short-chain dehydrogenases/reductases (SDR) family.

It carries out the reaction (S)-8-oxocitronellyl enol = cis-trans-nepetalactol. It catalyses the reaction cis-cis-nepetalactol + NAD(+) = cis-cis-nepetalactone + NADH + H(+). The enzyme catalyses cis-trans-nepetalactol + NAD(+) = cis-trans-nepetalactone + NADH + H(+). Its function is as follows. Bifunctional enzyme that possesses cyclase and dehydrogenase activities. Functions as a non-oxidoreductive cyclase to promote the formation of cis-trans-nepetalactol. Functions as dehydrogenase to oxidize cis-cis-nepetalactol and cis-trans-nepetalactol into nepetalactones, metabolites that are both insect-repellent and have euphoric effect in cats. Binds NAD(+) as classical short-chain dehydrogenase/reductase (SDR), but does not utilize it for its redox-neutral cyclase activity. This Nepeta racemosa (Catmint) protein is (+)-cis,trans-nepetalactol synthase NEPS1.